The following is a 1136-amino-acid chain: Myosin-binding protein C, fast-type (1136 aa).

Disordered regions lie at residues 1–55 and 151–177; these read MPEA…KKPD and APRQ…DAGE. Over residues 13–35 the composition is skewed to basic and acidic residues; it reads KGKDAPKEAPAKQTPEEPPKEAP. Positions 46-149 constitute an Ig-like C2-type 1 domain; that stretch reads PTGIFLKKPD…CDSCSFNVDV (104 aa). The segment covering 163–174 has biased composition (basic and acidic residues); that stretch reads SFKRSGDGKSED. Ig-like C2-type domains lie at 250–339, 340–432, 433–533, and 534–633; these read SAAF…VKEP, PVLI…VEEK, QLEV…KQEP, and PKIH…VVDV. 2 Fibronectin type-III domains span residues 636–732 and 734–829; these read PPEA…IAPT and APQH…IREI. In terms of domain architecture, Ig-like C2-type 6 spans 833–927; the sequence is PKIRLPRHLR…ATIRIRVVEK (95 aa). In terms of domain architecture, Fibronectin type-III 3 spans 930-1025; it reads PAENVMVKEV…SKNTARILKT (96 aa). In terms of domain architecture, Ig-like C2-type 7 spans 1043-1136; the sequence is PKFLTPLMDR…ECKLDVRVPQ (94 aa).

It belongs to the immunoglobulin superfamily. MyBP family.

Its function is as follows. Thick filament-associated protein located in the crossbridge region of vertebrate striated muscle a bands. In vitro it binds MHC, F-actin and native thin filaments, and modifies the activity of actin-activated myosin ATPase. It may modulate muscle contraction or may play a more structural role. This is Myosin-binding protein C, fast-type (Mybpc2) from Mus musculus (Mouse).